Reading from the N-terminus, the 118-residue chain is MLEFAPICIYLVISLLVSLILLGVPFLFASNSSTYPEKLSAYECGFDPFGDARSRFDIRFYLVSILFIIFDLEVTFFFPWAVSLNKIDLFGFWSMMAFLLILFIGSLYEWKRGALDWE.

A run of 3 helical transmembrane segments spans residues Ile-9–Ala-29, Leu-62–Val-82, and Ile-87–Leu-107.

This sequence belongs to the complex I subunit 3 family.

It localises to the mitochondrion membrane. It catalyses the reaction a ubiquinone + NADH + 5 H(+)(in) = a ubiquinol + NAD(+) + 4 H(+)(out). Functionally, core subunit of the mitochondrial membrane respiratory chain NADH dehydrogenase (Complex I) that is believed to belong to the minimal assembly required for catalysis. Complex I functions in the transfer of electrons from NADH to the respiratory chain. The immediate electron acceptor for the enzyme is believed to be ubiquinone. This chain is NADH-ubiquinone oxidoreductase chain 3 (ND3), found in Zea mays (Maize).